Consider the following 644-residue polypeptide: ATP-dependent zinc metalloprotease FtsH (644 aa).

Over 1-4 (MAKN) the chain is Cytoplasmic. Residues 5–25 (LILWLVIAVVLMSVFQSFGPS) form a helical membrane-spanning segment. Residues 26–98 (ESNGRKVDYS…VGEPPEEPSL (73 aa)) are Periplasmic-facing. The chain crosses the membrane as a helical span at residues 99–119 (LASIFISWFPMLLLIGVWIFF). Residues 120 to 644 (MRQMQGGGGK…NTMSEQLGDK (525 aa)) are Cytoplasmic-facing. 192–199 (GPPGTGKT) contacts ATP. His414 is a Zn(2+) binding site. The active site involves Glu415. Residues His418 and Asp492 each coordinate Zn(2+). The disordered stretch occupies residues 598-644 (VRPPAGWEEPGASNNSGDNGSPKAPRPVDEPRTPNPGNTMSEQLGDK). Over residues 632 to 644 (NPGNTMSEQLGDK) the composition is skewed to polar residues.

In the central section; belongs to the AAA ATPase family. The protein in the C-terminal section; belongs to the peptidase M41 family. As to quaternary structure, homohexamer. It depends on Zn(2+) as a cofactor.

It localises to the cell inner membrane. Functionally, acts as a processive, ATP-dependent zinc metallopeptidase for both cytoplasmic and membrane proteins. Plays a role in the quality control of integral membrane proteins. The sequence is that of ATP-dependent zinc metalloprotease FtsH from Shigella flexneri.